We begin with the raw amino-acid sequence, 152 residues long: Ribosome maturation factor RimP (152 aa).

This sequence belongs to the RimP family.

The protein resides in the cytoplasm. In terms of biological role, required for maturation of 30S ribosomal subunits. In Burkholderia lata (strain ATCC 17760 / DSM 23089 / LMG 22485 / NCIMB 9086 / R18194 / 383), this protein is Ribosome maturation factor RimP.